The primary structure comprises 463 residues: uncharacterized protein (463 aa).

In terms of domain architecture, PE spans 1–93 (MSYMIAVPDM…AGAYASAEAT (93 aa)). Disordered regions lie at residues 231–320 (GGAG…AGNG) and 408–463 (NGGD…TPGQ). Residues 408 to 451 (NGGDGGKGGDAQLIGNGGNGGNGGKGGTGLMPGINGTGGAGGSR) are compositionally biased toward gly residues.

The protein belongs to the mycobacterial PE family. PGRS subfamily.

This is an uncharacterized protein from Mycobacterium tuberculosis (strain ATCC 25618 / H37Rv).